We begin with the raw amino-acid sequence, 366 residues long: Peptide chain release factor 2 (366 aa).

Gln-251 bears the N5-methylglutamine mark.

The protein belongs to the prokaryotic/mitochondrial release factor family. Methylated by PrmC. Methylation increases the termination efficiency of RF2.

Its subcellular location is the cytoplasm. Its function is as follows. Peptide chain release factor 2 directs the termination of translation in response to the peptide chain termination codons UGA and UAA. The polypeptide is Peptide chain release factor 2 (prfB) (Listeria monocytogenes serotype 4b (strain F2365)).